Here is a 188-residue protein sequence, read N- to C-terminus: Elongation factor P (188 aa).

It belongs to the elongation factor P family.

The protein resides in the cytoplasm. The protein operates within protein biosynthesis; polypeptide chain elongation. Involved in peptide bond synthesis. Stimulates efficient translation and peptide-bond synthesis on native or reconstituted 70S ribosomes in vitro. Probably functions indirectly by altering the affinity of the ribosome for aminoacyl-tRNA, thus increasing their reactivity as acceptors for peptidyl transferase. The protein is Elongation factor P of Sulfurimonas denitrificans (strain ATCC 33889 / DSM 1251) (Thiomicrospira denitrificans (strain ATCC 33889 / DSM 1251)).